Here is a 268-residue protein sequence, read N- to C-terminus: Indole-3-glycerol phosphate synthase (268 aa).

The protein belongs to the TrpC family.

It catalyses the reaction 1-(2-carboxyphenylamino)-1-deoxy-D-ribulose 5-phosphate + H(+) = (1S,2R)-1-C-(indol-3-yl)glycerol 3-phosphate + CO2 + H2O. It functions in the pathway amino-acid biosynthesis; L-tryptophan biosynthesis; L-tryptophan from chorismate: step 4/5. The sequence is that of Indole-3-glycerol phosphate synthase from Lachnospira eligens (strain ATCC 27750 / DSM 3376 / VPI C15-48 / C15-B4) (Eubacterium eligens).